The chain runs to 744 residues: Protein pthb1 homolog (744 aa).

A compositionally biased stretch (basic and acidic residues) spans Glu722–Glu733. The interval Glu722–Ala744 is disordered. Residues Glu734–Ala744 are compositionally biased toward acidic residues.

As to quaternary structure, part of BBSome complex, that contains bbs-1, bbs-2, bbs-4, bbs-5, osm-12, bbs-8/ttc-8 and bbs-9. Interacts with bbs-1.

Component of the BBSome complex. The BBSome complex is thought to function as a coat complex required for sorting of specific membrane proteins to the primary cilia. The BBSome complex is required for ciliogenesis but is dispensable for centriolar satellite function. Required for proper BBSome complex assembly and its ciliary localization. Required for cilia biogenesis and both the assembly and movement of intraflagellar transport proteins along the ciliary axoneme. In ciliated sensory neurons, required for the sensation of nitric oxide and avoidance of NO-producing organisms like P.aeruginosa. In Caenorhabditis elegans, this protein is Protein pthb1 homolog.